Reading from the N-terminus, the 426-residue chain is 6-Hydroxy-7-prenyldeoxybrevianamide E synthase notC' (426 aa).

Residue glutamate 94 coordinates substrate. Residues arginine 105, lysine 191, and tyrosine 193 each coordinate dimethylallyl diphosphate. Residue tyrosine 195 participates in substrate binding. Dimethylallyl diphosphate is bound by residues lysine 267, tyrosine 269, glutamine 352, tyrosine 354, tyrosine 418, and tyrosine 422.

Belongs to the tryptophan dimethylallyltransferase family.

The enzyme catalyses 6-hydroxydeoxybrevianamide E + dimethylallyl diphosphate = notoamide S + diphosphate. The protein operates within alkaloid biosynthesis. Functionally, prenyltransferase; part of the gene cluster that mediates the biosynthesis of notoamide, a fungal indole alkaloid that belongs to a family of natural products containing a characteristic bicyclo[2.2.2]diazaoctane core. The first step of notoamide biosynthesis involves coupling of L-proline and L-tryptophan by the bimodular NRPS notE', to produce cyclo-L-tryptophan-L-proline called brevianamide F. The reverse prenyltransferase notF' then acts as a deoxybrevianamide E synthase and converts brevianamide F to deoxybrevianamide E via reverse prenylation at C-2 of the indole ring leading to the bicyclo[2.2.2]diazaoctane core. Deoxybrevianamide E is further hydroxylated at C-6 of the indole ring, likely catalyzed by the cytochrome P450 monooxygenase notG', to yield 6-hydroxy-deoxybrevianamide E. 6-hydroxy-deoxybrevianamide E is a specific substrate of the prenyltransferase notC' for normal prenylation at C-7 to produce 6-hydroxy-7-prenyl-deoxybrevianamide, also called notoamide S. As the proposed pivotal branching point in notoamide biosynthesis, notoamide S can be diverted to notoamide E through an oxidative pyran ring closure putatively catalyzed by either notH' cytochrome P450 monooxygenase or the notD' FAD-linked oxidoreductase. This step would be followed by an indole 2,3-epoxidation-initiated pinacol-like rearrangement catalyzed by the notB' FAD-dependent monooxygenase leading to the formation of notoamide C and notoamide D. On the other hand notoamide S is converted to notoamide T by notH' (or notD'), a bifunctional oxidase that also functions as the intramolecular Diels-Alderase responsible for generation of (-)-notoamide T. To generate antipodal (+)-notoaminide T, notH (or notD) in Aspergillus strain MF297-2 is expected to catalyze a Diels-Alder reaction leading to the opposite stereochemistry. The remaining oxidoreductase notD' (or notH') likely catalyzes the oxidative pyran ring formation to yield (-)-stephacidin A. The FAD-dependent monooxygenase notI' is highly similar to notB' and is predicted to catalyze a similar conversion from (-)-stephacidin A to (+)-notoamide B via the 2,3-epoxidation of (-)-stephacidin A followed by a pinacol-type rearrangement. Finally, it remains unclear which enzyme could be responsible for the final hydroxylation steps leading to notoamide A and sclerotiamide. In Aspergillus versicolor, this protein is 6-Hydroxy-7-prenyldeoxybrevianamide E synthase notC'.